The chain runs to 325 residues: Melanocortin receptor 5 (325 aa).

Residues 1-37 are Extracellular-facing; that stretch reads MNSSSTLTVLNLTLNASEDGILGSNVKNKSLACEEMG. N2, N11, N15, and N28 each carry an N-linked (GlcNAc...) asparagine glycan. A helical transmembrane segment spans residues 38-61; the sequence is IAVEVFLTLGLVSLLENILVIGAI. Residues 62–73 are Cytoplasmic-facing; that stretch reads VKNKNLHSPMYF. A helical transmembrane segment spans residues 74-97; the sequence is FVGSLAVADMLVSMSNAWETVTIY. Topologically, residues 98–114 are extracellular; sequence LLNNKHLVIADTFVRHI. A helical transmembrane segment spans residues 115–138; that stretch reads DNVFDSMICISVVASMCSLLAIAV. At 139–155 the chain is on the cytoplasmic side; that stretch reads DRYITIFYALRYHHIMT. The helical transmembrane segment at 156-179 threads the bilayer; it reads ARRSGVIIACIWTFCISCGIVFII. The Extracellular portion of the chain corresponds to 180–186; the sequence is YYESKYV. The helical transmembrane segment at 187 to 211 threads the bilayer; that stretch reads IICLISMFFTMLFFMVSLYIHMFLL. At 212-239 the chain is on the cytoplasmic side; that stretch reads ARNHVKRIAASPRYNSVRQRTSMKGAIT. The helical transmembrane segment at 240 to 265 threads the bilayer; the sequence is LTMLLGIFIVCWSPFFLHLILMISCP. The Extracellular portion of the chain corresponds to 266-273; the sequence is QNVYCSCF. The chain crosses the membrane as a helical span at residues 274–297; the sequence is MSYFNMYLILIMCNSVIDPLIYAL. The Cytoplasmic portion of the chain corresponds to 298–325; it reads RSQEMRRTFKEIVCCHGFRRPCRLLGGY. Residues C311 and C312 are each lipidated (S-palmitoyl cysteine).

The protein belongs to the G-protein coupled receptor 1 family. In terms of tissue distribution, skin, adrenal gland, skeletal muscle, bone marrow, spleen, thymus, gonads, uterus and brain.

The protein resides in the cell membrane. Functionally, receptor for MSH (alpha, beta and gamma) and ACTH. The activity of this receptor is mediated by G proteins which activate adenylate cyclase. This receptor is a possible mediator of the immunomodulation properties of melanocortins. This Mus musculus (Mouse) protein is Melanocortin receptor 5 (Mc5r).